A 476-amino-acid chain; its full sequence is Fatty acid hydroperoxide lyase, chloroplastic (476 aa).

Residues Leu-280 to Leu-300 traverse the membrane as a helical segment. Cys-438 is a heme binding site.

It belongs to the cytochrome P450 family. Heme serves as cofactor. In terms of tissue distribution, highly expressed in developing flowers and in young leaves. Detected in stems and immature green fruits, but not in mature green and red fruits.

The protein localises to the plastid. It is found in the chloroplast outer membrane. With respect to regulation, reversibly inhibited by nordihydroguaiaretic acid (NDGA) and irreversibly by salicylic acid. Functionally, cytochrome P450 of the CYP74B subfamily involved in the biosynthesis of traumatin and C6 aldehydes. Metabolizes 13- but not 9-hydroperoxides of linoleic and linolenic acids. Can use 15S-hydroperoxy-11(Z),13(E),17(Z)-eicosatrienoic acid (15-HPET) and 13S-hydroperoxy-9(Z),11(E),15(Z)-octadecatrienoic acid (13-HPOT) as substrates, but only 5% activity with 13S-hydroperoxy-9(Z),11(E)-octadecadienoic acid (13-HPOD). Produces n-hexanal and 12-oxo-9(Z)-dodecanoic acid from 13-HPOD. The sequence is that of Fatty acid hydroperoxide lyase, chloroplastic from Solanum lycopersicum (Tomato).